We begin with the raw amino-acid sequence, 211 residues long: Uracil phosphoribosyltransferase (211 aa).

GTP is bound at residue 30–34 (KGLVR). 5-phospho-alpha-D-ribose 1-diphosphate contacts are provided by residues arginine 79, arginine 104, and 133-141 (DPMLATGTT). Residues isoleucine 197 and 202 to 204 (GDA) contribute to the uracil site. Residue aspartate 203 coordinates 5-phospho-alpha-D-ribose 1-diphosphate.

Belongs to the UPRTase family. Mg(2+) is required as a cofactor.

It carries out the reaction UMP + diphosphate = 5-phospho-alpha-D-ribose 1-diphosphate + uracil. It functions in the pathway pyrimidine metabolism; UMP biosynthesis via salvage pathway; UMP from uracil: step 1/1. Allosterically activated by GTP. Its function is as follows. Catalyzes the conversion of uracil and 5-phospho-alpha-D-ribose 1-diphosphate (PRPP) to UMP and diphosphate. The polypeptide is Uracil phosphoribosyltransferase (Pyrobaculum arsenaticum (strain DSM 13514 / JCM 11321 / PZ6)).